Consider the following 249-residue polypeptide: Dihydroneopterin 2',3'-cyclic phosphate phosphodiesterase (249 aa).

The 115-residue stretch at 58-172 (LIEHTISVTK…VHYADEADSK (115 aa)) folds into the HD domain.

Homododecamer. Fe(2+) serves as cofactor. The cofactor is Zn(2+).

It carries out the reaction 7,8-dihydroneopterin 2',3'-cyclic phosphate + H2O = 7,8-dihydroneopterin 3'-phosphate + H(+). The enzyme catalyses 7,8-dihydroneopterin 2',3'-cyclic phosphate + H2O = 7,8-dihydroneopterin 2'-phosphate + H(+). Its pathway is cofactor biosynthesis; 5,6,7,8-tetrahydromethanopterin biosynthesis. Cyclic phosphodiesterase that hydrolyzes the cyclic phosphate of 7,8-dihydroneopterin 2',3'-cyclic phosphate (H2N-cP) and converts it to a mixture of 7,8-dihydroneopterin 2'-phosphate (H2N-2'P) and 7,8-dihydroneopterin 3'-phosphate (H2N-3'P). Is also able to utilize other phosphodiesters as substrates in vitro: hydrolysis of bis-pNPP and pNPPC produces nitrophenyl phosphate, and that of 2',3'-cAMP produces 3'-AMP. ATP, 3',5'-cAMP, GTP, 3',5'-cGMP, and 4',5'-cFMN cannot serve as substrates. The sequence is that of Dihydroneopterin 2',3'-cyclic phosphate phosphodiesterase (mptB) from Methanocaldococcus jannaschii (strain ATCC 43067 / DSM 2661 / JAL-1 / JCM 10045 / NBRC 100440) (Methanococcus jannaschii).